The following is a 488-amino-acid chain: MTNKARLRFAPSPTGQIHIGNIRTALFNWLYSRHIDGEFILRVEDTDMNRSVEEYEQIIFRALSWLGLDWDEGPQKGGDFGPYRQSERKDIYHKYANKLLEAGKAYYCYCTEEELEEMREAQRARGEMPRYSGKCADLSSEERAELENEGRKSVIRFKVPENQTIRVNDLVKGEVDFESDGIGDFILIKSDDMASYNFACVVDDYLMNITHVLRGEDHLSNTPKQVMIYEALGFETPEFGHLSLILGPDKAKLSKRHGDTFIGEYREKGYLPEAMVNFLALLGWSPPGEDELFTQDELIRLFDIGRVSKSAAVFDVDKLNWMNSHYIKEADTERLLNLSKEYLINSDLVSQEQLEHDWEWFVSAVDLVKEKIDMLSELPPQLKIFYGDDVDLKGEEVEFLEKDHVPELLSEVINQFNDLDSFEDPKAIKKAVNKAGKQVGVKGKQLFMPVRIAVSGQMHGPELDQLISLLGRERAINRVNSTLSQIQS.

A 'HIGH' region motif is present at residues 11-21 (PSPTGQIHIGN). 4 residues coordinate Zn(2+): C108, C110, C135, and D137. The short motif at 252–256 (KLSKR) is the 'KMSKS' region element. ATP is bound at residue K255.

The protein belongs to the class-I aminoacyl-tRNA synthetase family. Glutamate--tRNA ligase type 1 subfamily. In terms of assembly, monomer. The cofactor is Zn(2+).

It is found in the cytoplasm. The enzyme catalyses tRNA(Glu) + L-glutamate + ATP = L-glutamyl-tRNA(Glu) + AMP + diphosphate. Catalyzes the attachment of glutamate to tRNA(Glu) in a two-step reaction: glutamate is first activated by ATP to form Glu-AMP and then transferred to the acceptor end of tRNA(Glu). This is Glutamate--tRNA ligase from Natranaerobius thermophilus (strain ATCC BAA-1301 / DSM 18059 / JW/NM-WN-LF).